Here is a 209-residue protein sequence, read N- to C-terminus: Ribosomal RNA large subunit methyltransferase E (209 aa).

Positions 63, 65, 83, 99, and 124 each coordinate S-adenosyl-L-methionine. Lys-164 acts as the Proton acceptor in catalysis.

This sequence belongs to the class I-like SAM-binding methyltransferase superfamily. RNA methyltransferase RlmE family.

It localises to the cytoplasm. It carries out the reaction uridine(2552) in 23S rRNA + S-adenosyl-L-methionine = 2'-O-methyluridine(2552) in 23S rRNA + S-adenosyl-L-homocysteine + H(+). Functionally, specifically methylates the uridine in position 2552 of 23S rRNA at the 2'-O position of the ribose in the fully assembled 50S ribosomal subunit. In Shewanella baltica (strain OS223), this protein is Ribosomal RNA large subunit methyltransferase E.